The chain runs to 164 residues: HTH-type transcriptional regulator IscR (164 aa).

One can recognise an HTH rrf2-type domain in the interval 2–131; it reads RLTSKGRYAV…GSISLEELVK (130 aa). The segment at residues 28-51 is a DNA-binding region (H-T-H motif); sequence LADISERQGISLSYLEQLFSRLRK. C92, C98, and C104 together coordinate [2Fe-2S] cluster. The disordered stretch occupies residues 140 to 164; sequence DRQDSDKRRTPNGRPQETINVNLRA. A compositionally biased stretch (polar residues) spans 152-164; sequence GRPQETINVNLRA.

[2Fe-2S] cluster serves as cofactor.

Functionally, regulates the transcription of several operons and genes involved in the biogenesis of Fe-S clusters and Fe-S-containing proteins. The chain is HTH-type transcriptional regulator IscR from Xenorhabdus nematophila (strain ATCC 19061 / DSM 3370 / CCUG 14189 / LMG 1036 / NCIMB 9965 / AN6).